The following is a 208-amino-acid chain: uncharacterized protein (208 aa).

The tract at residues 126–151 (VGSGSGSDSSSGSTSSPNTVNNYNSD) is disordered. A compositionally biased stretch (low complexity) spans 131–141 (GSDSSSGSTSS).

This is an uncharacterized protein from Dictyostelium discoideum (Social amoeba).